The primary structure comprises 850 residues: Trimethylguanosine synthase (850 aa).

Residues 54-85 are disordered; it reads NNAGDRVTEEEEDDHSSGTTESHSADEGDLDP. The residue at position 61 (Thr-61) is a Phosphothreonine. 2 positions are modified to phosphoserine: Ser-92 and Ser-152. Disordered regions lie at residues 278 to 311, 327 to 454, and 523 to 566; these read DQNA…DNDH, EVEQ…GGIP, and ISQE…PENC. Residues 363–374 are compositionally biased toward basic and acidic residues; sequence TPKESDISENRS. Over residues 375–390 the composition is skewed to polar residues; that stretch reads SDQPAQELQESSGTNT. A phosphoserine mark is found at Ser-405 and Ser-431. Over residues 424–435 the composition is skewed to acidic residues; it reads DIDENPDSEVDD. Basic and acidic residues predominate over residues 548 to 562; it reads SMEKTDGLMETRDPE. The residue at position 571 (Ser-571) is a Phosphoserine. The segment at 595 to 628 is disordered; the sequence is TEGVANSPRAEAEVEIKKKKKKKKKNKNKKINGL. A compositionally biased stretch (basic residues) spans 611 to 624; it reads KKKKKKKKKNKNKK. Position 713 (Asp-713) interacts with S-adenosyl-L-methionine.

The protein belongs to the methyltransferase superfamily. Trimethylguanosine synthase family. As to quaternary structure, may form homooligomers. Interacts with CREBBP/CBP, EED/WAIT1, EP300/P300, NCOA6/PRIP, PPARBP/PBP and SMN. As to expression, a 55 kDa isoform is widely expressed while a 90 kDa isoform is detected exclusively in brain and testis (at protein level).

It is found in the cytoplasm. It localises to the nucleus. The protein resides in the cajal body. Its subcellular location is the nucleolus. The enzyme catalyses a 5'-end (N(7)-methyl 5'-triphosphoguanosine)-ribonucleoside in snRNA + S-adenosyl-L-methionine = a 5'-end (N(2),N(7)-dimethyl 5'-triphosphoguanosine)-ribonucleoside in snRNA + S-adenosyl-L-homocysteine + H(+). It carries out the reaction a 5'-end (N(7)-methyl 5'-triphosphoguanosine)-ribonucleoside in snoRNA + S-adenosyl-L-methionine = a 5'-end (N(2),N(7)-dimethyl 5'-triphosphoguanosine)-ribonucleoside in snoRNA + S-adenosyl-L-homocysteine + H(+). It catalyses the reaction a 5'-end (N(2),N(7)-dimethyl 5'-triphosphoguanosine)-ribonucleoside in snRNA + S-adenosyl-L-methionine = a 5'-end (N(2),N(2),N(7)-trimethyl 5'-triphosphoguanosine)-ribonucleoside in snRNA + S-adenosyl-L-homocysteine + H(+). The catalysed reaction is a 5'-end (N(2),N(7)-dimethyl 5'-triphosphoguanosine)-ribonucleoside in snoRNA + S-adenosyl-L-methionine = a 5'-end (N(2),N(2),N(7)-trimethyl 5'-triphosphoguanosine)-ribonucleoside in snoRNA + S-adenosyl-L-homocysteine + H(+). Catalyzes the 2 serial methylation steps for the conversion of the 7-monomethylguanosine (m(7)G) caps of snRNAs and snoRNAs to a 2,2,7-trimethylguanosine (m(2,2,7)G) cap structure. The enzyme is specific for guanine, and N7 methylation must precede N2 methylation. Hypermethylation of the m7G cap of U snRNAs leads to their concentration in nuclear foci, their colocalization with coilin and the formation of canonical Cajal bodies (CBs). Plays a role in transcriptional regulation. The sequence is that of Trimethylguanosine synthase from Rattus norvegicus (Rat).